A 283-amino-acid chain; its full sequence is MKTPFRKMDGLGNQIIVADMRESTHALTPQAILALAADPQTHFDQIMTIHSSTQKEADFRIEIWNADGSMAKACGNGTRCVIAWLTDHNLGESFRLETPAGIIEGKRQTDNLISVDMGCPNFNAKEMPVSREIADTNYVKITAGPLKDACLVSIGNLHAIFFVEDNIQQIPLEKYGPKLEHDPLFPERCNISIASVTSHKSLNLRTWERGAGLTKACGSAACASAVAAYRRGLTQRHIDVNLPGGTLNIVYREDNHIVMTGPTKYEFGGFLNPLTGTYKKDHF.

Substrate is bound by residues N13, Q45, and N65. Catalysis depends on C74, which acts as the Proton donor. Substrate-binding positions include 75–76 (GN), N156, N190, and 208–209 (ER). The active-site Proton acceptor is C217. 218–219 (GS) contributes to the substrate binding site.

This sequence belongs to the diaminopimelate epimerase family. As to quaternary structure, homodimer.

It is found in the cytoplasm. The catalysed reaction is (2S,6S)-2,6-diaminopimelate = meso-2,6-diaminopimelate. Its pathway is amino-acid biosynthesis; L-lysine biosynthesis via DAP pathway; DL-2,6-diaminopimelate from LL-2,6-diaminopimelate: step 1/1. In terms of biological role, catalyzes the stereoinversion of LL-2,6-diaminopimelate (L,L-DAP) to meso-diaminopimelate (meso-DAP), a precursor of L-lysine and an essential component of the bacterial peptidoglycan. This is Diaminopimelate epimerase from Bartonella quintana (strain Toulouse) (Rochalimaea quintana).